The following is a 524-amino-acid chain: Anthranilate synthase component 1 (524 aa).

The segment covering 1 to 16 (MQTTANHSSRSTQTGT) has biased composition (polar residues). Residues 1-25 (MQTTANHSSRSTQTGTRAHGAALAE) are disordered. L-tryptophan-binding positions include Ser74 and 298-300 (PYM). 339–340 (GT) is a binding site for chorismate. Residue Lys355 forms an Isoglutamyl lysine isopeptide (Lys-Gln) (interchain with Q-Cter in protein Pup) linkage. Glu366 provides a ligand contact to Mg(2+). Chorismate is bound by residues Tyr454, Arg474, 488–490 (GGG), and Gly490. Glu503 is a binding site for Mg(2+).

This sequence belongs to the anthranilate synthase component I family. As to quaternary structure, heterotetramer consisting of two non-identical subunits: a beta subunit (TrpG) and a large alpha subunit (TrpE). Requires Mg(2+) as cofactor.

The catalysed reaction is chorismate + L-glutamine = anthranilate + pyruvate + L-glutamate + H(+). It participates in amino-acid biosynthesis; L-tryptophan biosynthesis; L-tryptophan from chorismate: step 1/5. With respect to regulation, feedback inhibited by tryptophan. Part of a heterotetrameric complex that catalyzes the two-step biosynthesis of anthranilate, an intermediate in the biosynthesis of L-tryptophan. In the first step, the glutamine-binding beta subunit (TrpG) of anthranilate synthase (AS) provides the glutamine amidotransferase activity which generates ammonia as a substrate that, along with chorismate, is used in the second step, catalyzed by the large alpha subunit of AS (TrpE) to produce anthranilate. In the absence of TrpG, TrpE can synthesize anthranilate directly from chorismate and high concentrations of ammonia. The protein is Anthranilate synthase component 1 (trpE) of Mycolicibacterium smegmatis (strain ATCC 700084 / mc(2)155) (Mycobacterium smegmatis).